The primary structure comprises 313 residues: Cytochrome c oxidase assembly protein COX18, mitochondrial (313 aa).

The helical transmembrane segment at 209–229 (SLPLDAAPMLIPIILGTVSMI) threads the bilayer. The Mitochondrial matrix portion of the chain corresponds to 230–272 (NVEYNGKTMQATAVGTSGITTATDTQSRTSQTVNSILTATRLS). The helical transmembrane segment at 273–293 (TIFLIGVSTQASVLLSLYWIT) threads the bilayer. The Mitochondrial intermembrane segment spans residues 294-313 (SQVYSLIQNRILDLLWPYQR).

It belongs to the OXA1/ALB3/YidC family.

The protein resides in the mitochondrion inner membrane. Functionally, required for the insertion of integral membrane proteins into the mitochondrial inner membrane. Essential for the activity and assembly of cytochrome c oxidase. In Kluyveromyces lactis (strain ATCC 8585 / CBS 2359 / DSM 70799 / NBRC 1267 / NRRL Y-1140 / WM37) (Yeast), this protein is Cytochrome c oxidase assembly protein COX18, mitochondrial (COX18).